A 468-amino-acid chain; its full sequence is Phosphoglucosamine mutase (468 aa).

Catalysis depends on S112, which acts as the Phosphoserine intermediate. Mg(2+) contacts are provided by S112, D254, D256, and D258. Position 112 is a phosphoserine (S112).

It belongs to the phosphohexose mutase family. Requires Mg(2+) as cofactor. Activated by phosphorylation.

It carries out the reaction alpha-D-glucosamine 1-phosphate = D-glucosamine 6-phosphate. In terms of biological role, catalyzes the conversion of glucosamine-6-phosphate to glucosamine-1-phosphate. The polypeptide is Phosphoglucosamine mutase (Prochlorococcus marinus (strain MIT 9313)).